The chain runs to 267 residues: Indole-3-glycerol phosphate synthase (267 aa).

Belongs to the TrpC family.

It catalyses the reaction 1-(2-carboxyphenylamino)-1-deoxy-D-ribulose 5-phosphate + H(+) = (1S,2R)-1-C-(indol-3-yl)glycerol 3-phosphate + CO2 + H2O. The protein operates within amino-acid biosynthesis; L-tryptophan biosynthesis; L-tryptophan from chorismate: step 4/5. In Verminephrobacter eiseniae (strain EF01-2), this protein is Indole-3-glycerol phosphate synthase.